The sequence spans 415 residues: uncharacterized protein (415 aa).

Residues C85, C91, C94, and C175 each contribute to the [4Fe-4S] cluster site. S-adenosyl-L-methionine contacts are provided by Q248, Y276, E297, and N344. Catalysis depends on C371, which acts as the Nucleophile.

It belongs to the class I-like SAM-binding methyltransferase superfamily. RNA M5U methyltransferase family.

This is an uncharacterized protein from Leptospira interrogans serogroup Icterohaemorrhagiae serovar copenhageni (strain Fiocruz L1-130).